A 309-amino-acid chain; its full sequence is MLSTMEGVLLSVSTSEAVLGIVGNTFIALVNCMDYNRNKKLSNIGFILTGLAISRICLVLILITEAYIKIFYPQLLSPVNIIELISYLWIIICQLNVWFATSLSIFYFLKIANFSHYIFVWLKRRIDLVFFFLIGCLLISWLFSFPVVAKMVKDNKMLYINTSWQIHMKKSELIINYVFTNGGVFLFFMIMLIVCFLLIISLWRHRRQMESNKLGFRDLNTEVHVRTIKVLLSFIILFILHFMGITINVICLLIPESNLLFMFGLTTAFIYPGCHSLILILANSRLKQCSVMILQLLKCCENGKELRDT.

At 1–7 the chain is on the extracellular side; sequence MLSTMEG. The chain crosses the membrane as a helical span at residues 8–28; it reads VLLSVSTSEAVLGIVGNTFIA. At 29-43 the chain is on the cytoplasmic side; that stretch reads LVNCMDYNRNKKLSN. Residues 44–64 form a helical membrane-spanning segment; sequence IGFILTGLAISRICLVLILIT. The Extracellular segment spans residues 65 to 87; the sequence is EAYIKIFYPQLLSPVNIIELISY. The helical transmembrane segment at 88-108 threads the bilayer; it reads LWIIICQLNVWFATSLSIFYF. The Cytoplasmic portion of the chain corresponds to 109–127; sequence LKIANFSHYIFVWLKRRID. A helical membrane pass occupies residues 128–148; the sequence is LVFFFLIGCLLISWLFSFPVV. At 149–182 the chain is on the extracellular side; the sequence is AKMVKDNKMLYINTSWQIHMKKSELIINYVFTNG. N-linked (GlcNAc...) asparagine glycosylation occurs at asparagine 161. A helical membrane pass occupies residues 183–203; the sequence is GVFLFFMIMLIVCFLLIISLW. The Cytoplasmic segment spans residues 204–233; the sequence is RHRRQMESNKLGFRDLNTEVHVRTIKVLLS. The chain crosses the membrane as a helical span at residues 234–254; it reads FIILFILHFMGITINVICLLI. Residues 255-259 are Extracellular-facing; sequence PESNL. The helical transmembrane segment at 260–280 threads the bilayer; sequence LFMFGLTTAFIYPGCHSLILI. Topologically, residues 281–309 are cytoplasmic; the sequence is LANSRLKQCSVMILQLLKCCENGKELRDT.

This sequence belongs to the G-protein coupled receptor T2R family.

The protein resides in the membrane. Its function is as follows. Putative taste receptor which may play a role in the perception of bitterness. The protein is Taste receptor type 2 member 114 of Mus musculus (Mouse).